The sequence spans 81 residues: uncharacterized protein (81 aa).

This is an uncharacterized protein from Acidianus bottle-shaped virus (isolate Italy/Pozzuoli) (ABV).